We begin with the raw amino-acid sequence, 453 residues long: Trigger factor (453 aa).

The PPIase FKBP-type domain maps to Gly171 to Val256.

This sequence belongs to the FKBP-type PPIase family. Tig subfamily.

It is found in the cytoplasm. It catalyses the reaction [protein]-peptidylproline (omega=180) = [protein]-peptidylproline (omega=0). Functionally, involved in protein export. Acts as a chaperone by maintaining the newly synthesized protein in an open conformation. Functions as a peptidyl-prolyl cis-trans isomerase. In Rhodopseudomonas palustris (strain BisB5), this protein is Trigger factor.